A 181-amino-acid polypeptide reads, in one-letter code: uncharacterized protein (181 aa).

This is an uncharacterized protein from Rickettsia prowazekii (strain Madrid E).